Consider the following 396-residue polypeptide: Argininosuccinate synthase (396 aa).

9-17 (AYSGGLDTS) is a binding site for ATP. Tyr85 lines the L-citrulline pocket. Position 115 (Gly115) interacts with ATP. The L-aspartate site is built by Thr117, Asn121, and Asp122. An L-citrulline-binding site is contributed by Asn121. Residues Arg125, Ser173, Glu258, and Tyr270 each coordinate L-citrulline.

The protein belongs to the argininosuccinate synthase family. Type 1 subfamily. Homotetramer.

It localises to the cytoplasm. It carries out the reaction L-citrulline + L-aspartate + ATP = 2-(N(omega)-L-arginino)succinate + AMP + diphosphate + H(+). The protein operates within amino-acid biosynthesis; L-arginine biosynthesis; L-arginine from L-ornithine and carbamoyl phosphate: step 2/3. This Streptococcus agalactiae serotype V (strain ATCC BAA-611 / 2603 V/R) protein is Argininosuccinate synthase.